We begin with the raw amino-acid sequence, 111 residues long: WAP four-disulfide core domain protein 12 (111 aa).

An N-terminal signal peptide occupies residues 1–23 (MGSSSFLVLMVSLALVTLVVVEG). In terms of domain architecture, WAP spans 27–74 (GIEKAGVCPADNVRCFKSNPPQCHTDQDCLGERKCCYLHCGFKCVIPV). 4 cysteine pairs are disulfide-bonded: C34/C62, C41/C66, C49/C61, and C55/C70. A disordered region spans residues 80–111 (GGNKDEDVSGPHPEPGWEAKSPGSSSTGCPQI). Residues 101–111 (PGSSSTGCPQI) are compositionally biased toward polar residues.

The protein localises to the secreted. In terms of biological role, antibacterial protein. Putative acid-stable proteinase inhibitor. The sequence is that of WAP four-disulfide core domain protein 12 (WFDC12) from Colobus guereza (Mantled guereza).